The following is a 162-amino-acid chain: Dihydrofolate reductase type 3 (162 aa).

One can recognise a DHFR domain in the interval Leu-2–Arg-160.

Belongs to the dihydrofolate reductase family. As to quaternary structure, monomer.

It catalyses the reaction (6S)-5,6,7,8-tetrahydrofolate + NADP(+) = 7,8-dihydrofolate + NADPH + H(+). It participates in cofactor biosynthesis; tetrahydrofolate biosynthesis; 5,6,7,8-tetrahydrofolate from 7,8-dihydrofolate: step 1/1. Functionally, key enzyme in folate metabolism. Catalyzes an essential reaction for de novo glycine and purine synthesis, and for DNA precursor synthesis. The sequence is that of Dihydrofolate reductase type 3 (dhfrIII) from Salmonella typhimurium.